The sequence spans 300 residues: Protease HtpX (300 aa).

2 helical membrane passes run 4–24 and 40–60; these read ILLF…TLRL and SLLI…LFIS. H145 provides a ligand contact to Zn(2+). The active site involves E146. A Zn(2+)-binding site is contributed by H149. The next 2 membrane-spanning stretches (helical) occupy residues 153–173 and 193–213; these read GDMV…MFFA and LGFF…GLVA. E225 contacts Zn(2+).

Belongs to the peptidase M48B family. It depends on Zn(2+) as a cofactor.

The protein resides in the cell inner membrane. In Chromohalobacter salexigens (strain ATCC BAA-138 / DSM 3043 / CIP 106854 / NCIMB 13768 / 1H11), this protein is Protease HtpX.